Consider the following 159-residue polypeptide: Transcription elongation factor GreA (159 aa).

Belongs to the GreA/GreB family.

Its function is as follows. Necessary for efficient RNA polymerase transcription elongation past template-encoded arresting sites. The arresting sites in DNA have the property of trapping a certain fraction of elongating RNA polymerases that pass through, resulting in locked ternary complexes. Cleavage of the nascent transcript by cleavage factors such as GreA or GreB allows the resumption of elongation from the new 3'terminus. GreA releases sequences of 2 to 3 nucleotides. This chain is Transcription elongation factor GreA, found in Orientia tsutsugamushi (strain Boryong) (Rickettsia tsutsugamushi).